A 250-amino-acid chain; its full sequence is 2,3-bisphosphoglycerate-dependent phosphoglycerate mutase (250 aa).

Substrate contacts are provided by residues 10–17, 23–24, arginine 62, 89–92, lysine 100, 116–117, and 185–186; these read RHGESQWN, TG, ERHY, RR, and GN. Histidine 11 serves as the catalytic Tele-phosphohistidine intermediate. Residue glutamate 89 is the Proton donor/acceptor of the active site.

Belongs to the phosphoglycerate mutase family. BPG-dependent PGAM subfamily. As to quaternary structure, homodimer.

It catalyses the reaction (2R)-2-phosphoglycerate = (2R)-3-phosphoglycerate. The protein operates within carbohydrate degradation; glycolysis; pyruvate from D-glyceraldehyde 3-phosphate: step 3/5. Catalyzes the interconversion of 2-phosphoglycerate and 3-phosphoglycerate. In Salmonella agona (strain SL483), this protein is 2,3-bisphosphoglycerate-dependent phosphoglycerate mutase.